Consider the following 148-residue polypeptide: Small ribosomal subunit protein bS6 (148 aa).

The disordered stretch occupies residues 96 to 148 (HEEGQSAMLTRRDDRRERDGDDRPRRREGGFDRGDRGDRGPRRPRDNEAGEGA).

The protein belongs to the bacterial ribosomal protein bS6 family.

In terms of biological role, binds together with bS18 to 16S ribosomal RNA. In Brucella melitensis biotype 1 (strain ATCC 23456 / CCUG 17765 / NCTC 10094 / 16M), this protein is Small ribosomal subunit protein bS6.